The chain runs to 152 residues: Ribosomal RNA large subunit methyltransferase H (152 aa).

Residues Leu65, Gly96, and 115–120 contribute to the S-adenosyl-L-methionine site; that span reads LGPMTW.

Belongs to the RNA methyltransferase RlmH family. Homodimer.

It localises to the cytoplasm. The catalysed reaction is pseudouridine(1915) in 23S rRNA + S-adenosyl-L-methionine = N(3)-methylpseudouridine(1915) in 23S rRNA + S-adenosyl-L-homocysteine + H(+). Functionally, specifically methylates the pseudouridine at position 1915 (m3Psi1915) in 23S rRNA. This is Ribosomal RNA large subunit methyltransferase H from Gluconacetobacter diazotrophicus (strain ATCC 49037 / DSM 5601 / CCUG 37298 / CIP 103539 / LMG 7603 / PAl5).